Consider the following 295-residue polypeptide: Ribose-phosphate pyrophosphokinase (295 aa).

Residues 46–48 and 101–102 contribute to the ATP site; these read DGE and RQ. Residues histidine 132 and aspartate 171 each coordinate Mg(2+). Lysine 194 is a catalytic residue. 2 residues coordinate D-ribose 5-phosphate: arginine 196 and aspartate 220.

This sequence belongs to the ribose-phosphate pyrophosphokinase family. Class III (archaeal) subfamily. Mg(2+) serves as cofactor.

It localises to the cytoplasm. It carries out the reaction D-ribose 5-phosphate + ATP = 5-phospho-alpha-D-ribose 1-diphosphate + AMP + H(+). Its pathway is metabolic intermediate biosynthesis; 5-phospho-alpha-D-ribose 1-diphosphate biosynthesis; 5-phospho-alpha-D-ribose 1-diphosphate from D-ribose 5-phosphate (route I): step 1/1. Involved in the biosynthesis of the central metabolite phospho-alpha-D-ribosyl-1-pyrophosphate (PRPP) via the transfer of pyrophosphoryl group from ATP to 1-hydroxyl of ribose-5-phosphate (Rib-5-P). This chain is Ribose-phosphate pyrophosphokinase, found in Methanosarcina mazei (strain ATCC BAA-159 / DSM 3647 / Goe1 / Go1 / JCM 11833 / OCM 88) (Methanosarcina frisia).